A 219-amino-acid chain; its full sequence is Octanoyltransferase (219 aa).

The 176-residue stretch at 32–207 (ADSGDEIWLL…HLVRQLGYAQ (176 aa)) folds into the BPL/LPL catalytic domain. Residues 71-78 (RGGQVTYH), 138-140 (SLG), and 151-153 (GLA) contribute to the substrate site. Cys169 acts as the Acyl-thioester intermediate in catalysis.

The protein belongs to the LipB family.

It localises to the cytoplasm. It carries out the reaction octanoyl-[ACP] + L-lysyl-[protein] = N(6)-octanoyl-L-lysyl-[protein] + holo-[ACP] + H(+). The protein operates within protein modification; protein lipoylation via endogenous pathway; protein N(6)-(lipoyl)lysine from octanoyl-[acyl-carrier-protein]: step 1/2. Catalyzes the transfer of endogenously produced octanoic acid from octanoyl-acyl-carrier-protein onto the lipoyl domains of lipoate-dependent enzymes. Lipoyl-ACP can also act as a substrate although octanoyl-ACP is likely to be the physiological substrate. The polypeptide is Octanoyltransferase (Stutzerimonas stutzeri (strain A1501) (Pseudomonas stutzeri)).